Reading from the N-terminus, the 147-residue chain is UPF0306 protein YhbP (147 aa).

The protein belongs to the UPF0306 family.

This is UPF0306 protein YhbP from Escherichia coli O8 (strain IAI1).